We begin with the raw amino-acid sequence, 442 residues long: Cyclin-A1-2 (442 aa).

Composition is skewed to polar residues over residues 1-12 (MSSSSRNLSQEN) and 39-63 (ITNQKNGSRNPSPSSTLVNCSNKIG). The segment at 1–72 (MSSSSRNLSQ…GQSKKAPKPA (72 aa)) is disordered.

The protein belongs to the cyclin family. Cyclin AB subfamily. Interacts with CDC20-1, CDC20-2, FZR2/CCS52A1 and FZR1/CCS52A2. Expressed in roots, stems and flowers.

The protein resides in the cytoplasm. It is found in the nucleus. Involved in the regulation of male meiosis progression. This is Cyclin-A1-2 (CYCA1-2) from Arabidopsis thaliana (Mouse-ear cress).